The sequence spans 257 residues: NH(3)-dependent NAD(+) synthetase (257 aa).

An ATP-binding site is contributed by 40-47 (GISGGIDS). Aspartate 46 is a Mg(2+) binding site. Residue arginine 121 coordinates deamido-NAD(+). Threonine 141 is a binding site for ATP. Glutamate 146 contributes to the Mg(2+) binding site. Residues lysine 154 and aspartate 161 each contribute to the deamido-NAD(+) site. ATP is bound by residues lysine 170 and serine 192. A deamido-NAD(+)-binding site is contributed by 238-239 (HK).

This sequence belongs to the NAD synthetase family. Homodimer.

The enzyme catalyses deamido-NAD(+) + NH4(+) + ATP = AMP + diphosphate + NAD(+) + H(+). It participates in cofactor biosynthesis; NAD(+) biosynthesis; NAD(+) from deamido-NAD(+) (ammonia route): step 1/1. In terms of biological role, catalyzes the ATP-dependent amidation of deamido-NAD to form NAD. Uses ammonia as a nitrogen source. The polypeptide is NH(3)-dependent NAD(+) synthetase (Mycoplasmopsis pulmonis (strain UAB CTIP) (Mycoplasma pulmonis)).